A 1024-amino-acid polypeptide reads, in one-letter code: Carbamoyl phosphate synthase large chain (1024 aa).

The tract at residues 1–396 (MDIKKILVIG…AWQKAVRMID (396 aa)) is carboxyphosphate synthetic domain. Arginine 125, arginine 165, glycine 171, glycine 172, lysine 204, leucine 206, glutamate 211, glycine 237, valine 238, histidine 239, glutamine 280, and glutamate 294 together coordinate ATP. Residues 129–323 (QKAMREAGIP…LAYIAAKLAL (195 aa)) enclose the ATP-grasp 1 domain. Positions 280, 294, and 296 each coordinate Mg(2+). The Mn(2+) site is built by glutamine 280, glutamate 294, and asparagine 296. The tract at residues 397–536 (IGEPGLVGGP…LTYGGQYDDK (140 aa)) is oligomerization domain. Residues 536–917 (KTPGVDYLVV…LKSWLSATPN (382 aa)) form a carbamoyl phosphate synthetic domain region. The 190-residue stretch at 660 to 849 (SKLLDRLGIK…YMSLVADVLT (190 aa)) folds into the ATP-grasp 2 domain. 9 residues coordinate ATP: arginine 696, lysine 735, glutamate 742, glycine 766, valine 767, histidine 768, serine 769, glutamine 809, and glutamate 820. The Mg(2+) site is built by glutamine 809, glutamate 820, and asparagine 822. 3 residues coordinate Mn(2+): glutamine 809, glutamate 820, and asparagine 822. The MGS-like domain maps to 917–1024 (NKIPSKTALI…KNGKLEVAPW (108 aa)). The segment at 918–1024 (KIPSKTALIY…KNGKLEVAPW (107 aa)) is allosteric domain.

This sequence belongs to the CarB family. As to quaternary structure, composed of two chains; the small (or glutamine) chain promotes the hydrolysis of glutamine to ammonia, which is used by the large (or ammonia) chain to synthesize carbamoyl phosphate. Tetramer of heterodimers (alpha,beta)4. Requires Mg(2+) as cofactor. Mn(2+) is required as a cofactor.

It catalyses the reaction hydrogencarbonate + L-glutamine + 2 ATP + H2O = carbamoyl phosphate + L-glutamate + 2 ADP + phosphate + 2 H(+). It carries out the reaction hydrogencarbonate + NH4(+) + 2 ATP = carbamoyl phosphate + 2 ADP + phosphate + 2 H(+). Its pathway is amino-acid biosynthesis; L-arginine biosynthesis; carbamoyl phosphate from bicarbonate: step 1/1. It participates in pyrimidine metabolism; UMP biosynthesis via de novo pathway; (S)-dihydroorotate from bicarbonate: step 1/3. Large subunit of the glutamine-dependent carbamoyl phosphate synthetase (CPSase). CPSase catalyzes the formation of carbamoyl phosphate from the ammonia moiety of glutamine, carbonate, and phosphate donated by ATP, constituting the first step of 2 biosynthetic pathways, one leading to arginine and/or urea and the other to pyrimidine nucleotides. The large subunit (synthetase) binds the substrates ammonia (free or transferred from glutamine from the small subunit), hydrogencarbonate and ATP and carries out an ATP-coupled ligase reaction, activating hydrogencarbonate by forming carboxy phosphate which reacts with ammonia to form carbamoyl phosphate. The protein is Carbamoyl phosphate synthase large chain of Pyrobaculum aerophilum (strain ATCC 51768 / DSM 7523 / JCM 9630 / CIP 104966 / NBRC 100827 / IM2).